Here is a 261-residue protein sequence, read N- to C-terminus: Complex I assembly factor TIMMDC1, mitochondrial (261 aa).

3 helical membrane passes run 67–87 (LNSV…YGGV), 131–151 (WGWR…CMSV), and 183–203 (AGGI…LLLM).

The protein belongs to the Tim17/Tim22/Tim23 family. Associates with complex I assembly intermediates during its biogenesis in a NdufAF3 and NdufAF4 dependent manner.

Its subcellular location is the membrane. Functionally, chaperone protein involved in the assembly of the mitochondrial NADH:ubiquinone oxidoreductase complex (complex I). Essential for viability. This chain is Complex I assembly factor TIMMDC1, mitochondrial, found in Drosophila melanogaster (Fruit fly).